Reading from the N-terminus, the 304-residue chain is UDP-N-acetylenolpyruvoylglucosamine reductase (304 aa).

The region spanning 33-198 (KVGGPVDILL…LEVTFNLEKG (166 aa)) is the FAD-binding PCMH-type domain. Arg177 is an active-site residue. Ser227 functions as the Proton donor in the catalytic mechanism. Residue Glu297 is part of the active site.

Belongs to the MurB family. The cofactor is FAD.

It is found in the cytoplasm. It carries out the reaction UDP-N-acetyl-alpha-D-muramate + NADP(+) = UDP-N-acetyl-3-O-(1-carboxyvinyl)-alpha-D-glucosamine + NADPH + H(+). The protein operates within cell wall biogenesis; peptidoglycan biosynthesis. Cell wall formation. This is UDP-N-acetylenolpyruvoylglucosamine reductase from Clostridium kluyveri (strain NBRC 12016).